We begin with the raw amino-acid sequence, 891 residues long: Targeting protein for Xklp2 homolog (891 aa).

The segment covering 42–54 (HENGVPLTFDDKA) has biased composition (basic and acidic residues). Disordered regions lie at residues 42–310 (HENG…KSCP), 418–454 (NLRKYVPSPSKPQGITKPRPFNFSDNRKRTHEESFSG), 472–518 (HTKT…NRHR), 723–746 (CSGVPDKKVKPPTQMAPFSVAEKG), and 789–891 (STKP…SHTS). The segment covering 108-124 (DDVSSAESETCEMSTDS) has biased composition (polar residues). Residues 141 to 154 (DDEATVQESSDAEE) show a composition bias toward acidic residues. A compositionally biased stretch (polar residues) spans 155 to 173 (TQTLPSSCVDSSTAEMSTD). Residues 236–246 (PTRKSPRLHSR) are compositionally biased toward basic residues. Over residues 442–454 (DNRKRTHEESFSG) the composition is skewed to basic and acidic residues. Positions 791–802 (KPMTDISNFSLN) are enriched in polar residues. Basic and acidic residues-rich tracts occupy residues 803–822 (TERRAEDRKGYEQAKYERQL) and 831–852 (REAEKEEELRQQISKQRADSIH).

The protein belongs to the TPX2 family. As to expression, detectable in immature oocytes.

It is found in the nucleus. The protein localises to the cytoplasm. Its subcellular location is the cytoskeleton. It localises to the spindle. Functionally, spindle assembly factor. Required for normal assembly of mitotic spindles. This chain is Targeting protein for Xklp2 homolog, found in Patiria pectinifera (Starfish).